Reading from the N-terminus, the 562-residue chain is Wee1-like protein kinase 2 (562 aa).

Disordered stretches follow at residues 1 to 86 (MRTA…DKGV) and 161 to 181 (YRQA…DDCS). Polar residues predominate over residues 35–48 (HSNQRGSPVNSWRA). Residues 217–491 (FLEIEKIGAG…AKNSLLRRCV (275 aa)) form the Protein kinase domain. Residues 223 to 231 (IGAGEFGSV) and K246 each bind ATP. The active-site Proton acceptor is D344. 2 residues coordinate Mg(2+): N349 and D381. Residues 494–520 (AAQLQKQLNVEKFKTAMLERELKAAKL) are a coiled coil.

It belongs to the protein kinase superfamily. Ser/Thr protein kinase family. WEE1 subfamily.

It is found in the nucleus. The enzyme catalyses L-tyrosyl-[protein] + ATP = O-phospho-L-tyrosyl-[protein] + ADP + H(+). Functionally, oocyte-specific protein tyrosine kinase that phosphorylates and inhibits cdk1 and acts as a regulator of meiosis. Required to maintain meiotic arrest in oocytes by phosphorylating cdk1 at 'Tyr-15', leading to inhibit cdk1 activity and prevent meiotic reentry. This is Wee1-like protein kinase 2 (wee2) from Xenopus tropicalis (Western clawed frog).